Reading from the N-terminus, the 165-residue chain is Disulfide bond formation protein B (165 aa).

Topologically, residues 1 to 10 (MPAWLTNRTI) are cytoplasmic. The helical transmembrane segment at 11–27 (YFLCFLAIAGLMGFAFY) threads the bilayer. Residues 28–45 (LQYVKDLEPCPLCMAQRI) lie on the Periplasmic side of the membrane. Cysteines 37 and 40 form a disulfide. The chain crosses the membrane as a helical span at residues 46–62 (AFVLAGLVFLAAALHNP). Residues 63–68 (KNTGTT) are Cytoplasmic-facing. The helical transmembrane segment at 69-86 (VYAFLGWVTTLGGAALAT) threads the bilayer. At 87–143 (RQLWLQSLPADQVPACGPGLEYMLEAFPFSEVLTMMLTGTGECAEVQWTFLGLSIPG) the chain is on the periplasmic side. C102 and C129 are disulfide-bonded. The chain crosses the membrane as a helical span at residues 144–162 (WTLVAFIGFTAVWAFAWVR). The Cytoplasmic segment spans residues 163 to 165 (RPR).

It belongs to the DsbB family.

The protein resides in the cell inner membrane. Functionally, required for disulfide bond formation in some periplasmic proteins. Acts by oxidizing the DsbA protein. The protein is Disulfide bond formation protein B of Hahella chejuensis (strain KCTC 2396).